The chain runs to 176 residues: Urease accessory protein UreE (176 aa).

Belongs to the UreE family.

Its subcellular location is the cytoplasm. Its function is as follows. Involved in urease metallocenter assembly. Binds nickel. Probably functions as a nickel donor during metallocenter assembly. In Helicobacter bizzozeronii, this protein is Urease accessory protein UreE.